The primary structure comprises 521 residues: Lymphocyte activation gene 3 protein (521 aa).

Positions 1–23 are cleaved as a signal peptide; it reads MREDLLLGFLLLGLLWEAPVVSS. Topologically, residues 24–442 are extracellular; sequence GPGKELPVVW…ISGDLKGGHL (419 aa). The Ig-like V-type domain occupies 37-163; the sequence is GAPVHLPCSL…LSCSLRLRVG (127 aa). The segment at 37–246 is interaction with FGL1; sequence GAPVHLPCSL…LTYRDGFNVS (210 aa). A disulfide bridge connects residues cysteine 44 and cysteine 156. Ig-like C2-type domains lie at 165–246, 258–341, and 345–412; these read ASMI…FNVS, PVAP…ATVT, and ITVT…EGQR. N-linked (GlcNAc...) asparagine glycosylation is present at asparagine 184. The cysteines at positions 185 and 235 are disulfide-linked. Asparagine 244, asparagine 309, asparagine 337, and asparagine 381 each carry an N-linked (GlcNAc...) asparagine glycan. Residues cysteine 276 and cysteine 327 are joined by a disulfide bond. Cysteine 363 and cysteine 405 are disulfide-bonded. The connecting peptide stretch occupies residues 422–442; sequence ESSSGAHSARRISGDLKGGHL. The chain crosses the membrane as a helical span at residues 443-463; sequence VLVLILGALSLFLLVAGAFGF. Over 464 to 521 the chain is Cytoplasmic; it reads HWWRKQLLLRRFSALEHGIQPFPAQRKIEELERELETEMGQEPEPEPEPQLEPEPRQL. Positions 490–495 match the KIEELE motif motif; the sequence is KIEELE. Positions 493 to 518 are 13 X 2 AA tandem repeats of E-X; sequence ELERELETEMGQEPEPEPEPQLEPEP. The interval 493–521 is disordered; the sequence is ELERELETEMGQEPEPEPEPQLEPEPRQL. Residues 500 to 514 are compositionally biased toward acidic residues; the sequence is TEMGQEPEPEPEPQL.

This sequence belongs to the LAG3 family. As to quaternary structure, interacts with MHC class II (MHC-II); selectively recognizes stable complexes of peptide and MHC-II. Interacts with FGL1 (via the Fibrinogen C-terminal domain). Proteolytically cleaved by ADAM10 and ADAM17 within the connecting peptide region, leading to release of Secreted lymphocyte activation gene 3 protein (sLAG-3). ADAM10 mediates constitutive cleavage, but cleavage increases following T-cell activation, whereas shedding by ADAM17 is induced by TCR signaling in a PRKCQ-dependent manner. Primarily expressed in activated CD4(+) and CD8(+) T-cells. Also expressed in a subset of regulatory T-cells (Tregs), such as natural CD4(+)CD25(+) Tregs. Also expressed on plasmacytoid dendritic cells (pDCs).

The protein localises to the cell membrane. The protein resides in the secreted. In terms of biological role, lymphocyte activation gene 3 protein: Inhibitory receptor on antigen activated T-cells. Delivers inhibitory signals upon binding to ligands, such as FGL1. FGL1 constitutes a major ligand of LAG3 and is responsible for LAG3 T-cell inhibitory function. Following TCR engagement, LAG3 associates with CD3-TCR in the immunological synapse and directly inhibits T-cell activation. May inhibit antigen-specific T-cell activation in synergy with PDCD1/PD-1, possibly by acting as a coreceptor for PDCD1/PD-1. Negatively regulates the proliferation, activation, effector function and homeostasis of both CD8(+) and CD4(+) T-cells. Also mediates immune tolerance: constitutively expressed on a subset of regulatory T-cells (Tregs) and contributes to their suppressive function. Also acts as a negative regulator of plasmacytoid dendritic cell (pDCs) activation. Binds MHC class II (MHC-II); the precise role of MHC-II-binding is however unclear. Functionally, may function as a ligand for MHC class II (MHC-II) on antigen-presenting cells (APC), promoting APC activation/maturation and driving Th1 immune response. The sequence is that of Lymphocyte activation gene 3 protein from Mus musculus (Mouse).